A 309-amino-acid polypeptide reads, in one-letter code: Probable 5-dehydro-4-deoxyglucarate dehydratase (309 aa).

Belongs to the DapA family.

The catalysed reaction is 5-dehydro-4-deoxy-D-glucarate + H(+) = 2,5-dioxopentanoate + CO2 + H2O. It participates in carbohydrate acid metabolism; D-glucarate degradation; 2,5-dioxopentanoate from D-glucarate: step 2/2. In Saccharopolyspora erythraea (strain ATCC 11635 / DSM 40517 / JCM 4748 / NBRC 13426 / NCIMB 8594 / NRRL 2338), this protein is Probable 5-dehydro-4-deoxyglucarate dehydratase.